Consider the following 289-residue polypeptide: Glycine--tRNA ligase alpha subunit (289 aa).

This sequence belongs to the class-II aminoacyl-tRNA synthetase family. In terms of assembly, tetramer of two alpha and two beta subunits.

It is found in the cytoplasm. It carries out the reaction tRNA(Gly) + glycine + ATP = glycyl-tRNA(Gly) + AMP + diphosphate. The chain is Glycine--tRNA ligase alpha subunit from Nitratidesulfovibrio vulgaris (strain ATCC 29579 / DSM 644 / CCUG 34227 / NCIMB 8303 / VKM B-1760 / Hildenborough) (Desulfovibrio vulgaris).